Reading from the N-terminus, the 199-residue chain is MPADTAPMNLTHHFLIAMPGVEDASFSRSVVYLCEHSERGALGLIINKPTPISLEGLFEKVDLSLGREDLTLQPVFQGGPVQTERGFVLHEAMRGPQESEDESPYASTMTIPGGLEMTTSKDVLEALAHGAGPRRVLVTLGYSAWGEGQLESELAENSWLTVGADVSVIFETPVQERYDRALGLLGLQSWMLSPEAGHA.

It belongs to the UPF0301 (AlgH) family.

The sequence is that of UPF0301 protein Ajs_3573 from Acidovorax sp. (strain JS42).